The following is a 514-amino-acid chain: MATPSLIPTDADRDHPVRIHRVTRTNRHLWYQLTVLQQPERARACGAGTKDSDRRPVDPPPVVELRIKEGNSFEEGKEITFDYNANFFLYASLEQSRRIAPGRMQGQPNPPILTGSPVSGMAYLDRPAAAGYFIFPDLSVRHEGHYRLSFSLFETTKDEKDLDIERASDDRLDTGADWRMEIKTSPFDVFSAKKFPGLMESTPLSKEVADQGCHVRIRRDVRMRKRDAKSNNGRDRREDDMARRRTVTPASEDPHSAAARARSMSNSSEHRVPGPPEPPGHPSAVDPAGRGHLSFGGPQYASPHQYGLQSRLPPPSPGGPYNPATQYIKPEHQSYRYPPSRDMSQTGPSPAPRQDGHDRRQSGPYVPPSPSVYSNDGRSRPESHPSYPSTPVSSHPANLPSDPSLVLPRIKSPSNSVSPSNSSLKITDLLVQPLPSSEPKLEVGSAPCPPPKTPIGSKRKHDQTFVQNDRALRNHQRQLDPHYNPVARPCSPVGEQYKRADGTYMYAKFSVFTM.

The 193-residue stretch at 26–218 (NRHLWYQLTV…ADQGCHVRIR (193 aa)) folds into the Velvet domain. The short motif at 40–45 (ERARAC) is the Nuclear localization signal element. Positions 219-463 (RDVRMRKRDA…PIGSKRKHDQ (245 aa)) are disordered. The span at 228–243 (AKSNNGRDRREDDMAR) shows a compositional bias: basic and acidic residues. The span at 256–267 (SAAARARSMSNS) shows a compositional bias: low complexity. Polar residues predominate over residues 386 to 396 (SYPSTPVSSHP). Positions 411–448 (KSPSNSVSPSNSSLKITDLLVQPLPSSEPKLEVGSAPC) are PEST. Low complexity predominate over residues 412–423 (SPSNSVSPSNSS).

It belongs to the velvet family. VeA subfamily. As to quaternary structure, component of the heterotrimeric velvet complex composed of laeA, veA and velB; VeA acting as a bridging protein between laeA and velB.

The protein localises to the nucleus. Its subcellular location is the cytoplasm. Its function is as follows. Component of the velvet transcription factor complex that controls sexual/asexual developmental ratio in response to light, promoting sexual development in the darkness while stimulating asexual sporulation under illumination. The velvet complex hat acts as a global regulator for secondary metabolite gene expression. Controls the expression of the cephalosporin C gene cluster. Regulates hyphal fragmentation. In Hapsidospora chrysogenum (strain ATCC 11550 / CBS 779.69 / DSM 880 / IAM 14645 / JCM 23072 / IMI 49137) (Acremonium chrysogenum), this protein is Developmental and secondary metabolism regulator veA.